A 124-amino-acid chain; its full sequence is Glutaredoxin-2 (124 aa).

A disulfide bridge links Cys13 with Cys16.

This sequence belongs to the glutaredoxin family. As to quaternary structure, homodimer.

Its subcellular location is the host cytoplasm. In terms of biological role, glutaredoxin necessary for virion morphogenesis and virus replication. Functions as a thiol-disulfide transfer protein between membrane-associated OPG128 and substrates OPG095 or OPG053. The complete pathway for formation of disulfide bonds in intracellular virion membrane proteins sequentially involves oxidation of OPG072, OPG128 and OPG088. Exhibit thioltransferase and dehydroascorbate reductase activities in vitro. The sequence is that of Glutaredoxin-2 (OPG088) from Mus musculus (Mouse).